The chain runs to 323 residues: ATP synthase gamma chain (323 aa).

This sequence belongs to the ATPase gamma chain family. As to quaternary structure, F-type ATPases have 2 components, CF(1) - the catalytic core - and CF(0) - the membrane proton channel. CF(1) has five subunits: alpha(3), beta(3), gamma(1), delta(1), epsilon(1). CF(0) has three main subunits: a, b and c.

The protein localises to the cell inner membrane. Its function is as follows. Produces ATP from ADP in the presence of a proton gradient across the membrane. The gamma chain is believed to be important in regulating ATPase activity and the flow of protons through the CF(0) complex. The protein is ATP synthase gamma chain of Rickettsia africae (strain ESF-5).